Reading from the N-terminus, the 461-residue chain is 3-oxoacyl-[acyl-carrier-protein] synthase, mitochondrial (461 aa).

The N-terminal 28 residues, 1-28 (MATSNLRRHLSASRLRLNRFISTSSSYH), are a transit peptide targeting the mitochondrion. In terms of domain architecture, Ketosynthase family 3 (KS3) spans 30-460 (HRRVVVTGLG…GTNASLLFAS (431 aa)). Active-site for beta-ketoacyl synthase activity residues include Cys209, His350, and His389.

The protein belongs to the thiolase-like superfamily. Beta-ketoacyl-ACP synthases family. Homodimer. As to expression, expressed at the same level in leaves, roots, siliques and flowers.

It localises to the mitochondrion. The catalysed reaction is a fatty acyl-[ACP] + malonyl-[ACP] + H(+) = a 3-oxoacyl-[ACP] + holo-[ACP] + CO2. The enzyme catalyses butanoyl-[ACP] + malonyl-[ACP] + H(+) = 3-oxohexanoyl-[ACP] + holo-[ACP] + CO2. It carries out the reaction hexanoyl-[ACP] + malonyl-[ACP] + H(+) = 3-oxooctanoyl-[ACP] + holo-[ACP] + CO2. It catalyses the reaction octanoyl-[ACP] + malonyl-[ACP] + H(+) = 3-oxodecanoyl-[ACP] + holo-[ACP] + CO2. The catalysed reaction is decanoyl-[ACP] + malonyl-[ACP] + H(+) = 3-oxododecanoyl-[ACP] + holo-[ACP] + CO2. The enzyme catalyses dodecanoyl-[ACP] + malonyl-[ACP] + H(+) = 3-oxotetradecanoyl-[ACP] + holo-[ACP] + CO2. It carries out the reaction tetradecanoyl-[ACP] + malonyl-[ACP] + H(+) = 3-oxohexadecanoyl-[ACP] + holo-[ACP] + CO2. It catalyses the reaction hexadecanoyl-[ACP] + malonyl-[ACP] + H(+) = 3-oxooctadecanoyl-[ACP] + holo-[ACP] + CO2. It participates in lipid metabolism; fatty acid biosynthesis. Inhibited by cerulenin. In terms of biological role, catalyzes all the condensation reaction of fatty acid synthesis by the addition to an acyl acceptor of two carbons from malonyl-ACP. Able to elongate saturated acyl chains from 4 to at least 16 carbons. Uses malonyl-CoA but not acetyl-CoA as primer substrate. When expressed in a heterologous system, reveals a bimodal distribution of products, with peaks at C8 and C14-C16. The major product of the reaction (octanoyl-ACP) is required for the lipoylation of essential mitochondrial proteins. Required for mitochondrial fatty acid synthesis (mtFAS). MtFAS are essential for photorespiration and plant development, probably by influencing mitochondrial membrane lipid composition and other lipid metabolic pathways. The chain is 3-oxoacyl-[acyl-carrier-protein] synthase, mitochondrial from Arabidopsis thaliana (Mouse-ear cress).